The primary structure comprises 493 residues: Ribulose bisphosphate carboxylase large chain (493 aa).

A substrate-binding site is contributed by Asn-132. At Cys-181 the chain carries S-nitrosocysteine. Thr-182 is a binding site for substrate. Lys-184 serves as the catalytic Proton acceptor. Lys-186 lines the substrate pocket. Mg(2+) contacts are provided by Lys-210, Asp-212, and Glu-213. Lys-210 carries the N6-carboxylysine modification. Residue His-302 is the Proton acceptor of the active site. Substrate is bound by residues Arg-303, His-335, and Ser-387. At Cys-460 the chain carries S-nitrosocysteine.

It belongs to the RuBisCO large chain family. Type I subfamily. As to quaternary structure, heterohexadecamer of 8 large chains and 8 small chains. It depends on Mg(2+) as a cofactor.

Its subcellular location is the plastid. It localises to the chloroplast. The enzyme catalyses 2 (2R)-3-phosphoglycerate + 2 H(+) = D-ribulose 1,5-bisphosphate + CO2 + H2O. The catalysed reaction is D-ribulose 1,5-bisphosphate + O2 = 2-phosphoglycolate + (2R)-3-phosphoglycerate + 2 H(+). Its function is as follows. RuBisCO catalyzes two reactions: the carboxylation of D-ribulose 1,5-bisphosphate, the primary event in carbon dioxide fixation, as well as the oxidative fragmentation of the pentose substrate in the photorespiration process. Both reactions occur simultaneously and in competition at the same active site. Carbon dioxide and oxygen bind in the same pocket of the enzyme in a similar manner. This is Ribulose bisphosphate carboxylase large chain from Galdieria sulphuraria (Red alga).